A 315-amino-acid chain; its full sequence is Ribosomal RNA small subunit methyltransferase H (315 aa).

Residues 37–39 (GGH), Asp57, Phe83, Asp105, and Gln112 each bind S-adenosyl-L-methionine.

It belongs to the methyltransferase superfamily. RsmH family.

It is found in the cytoplasm. It carries out the reaction cytidine(1402) in 16S rRNA + S-adenosyl-L-methionine = N(4)-methylcytidine(1402) in 16S rRNA + S-adenosyl-L-homocysteine + H(+). Its function is as follows. Specifically methylates the N4 position of cytidine in position 1402 (C1402) of 16S rRNA. This Pseudomonas putida (strain ATCC 47054 / DSM 6125 / CFBP 8728 / NCIMB 11950 / KT2440) protein is Ribosomal RNA small subunit methyltransferase H.